Reading from the N-terminus, the 323-residue chain is Aquaporin-2 (323 aa).

3 helical membrane-spanning segments follow: residues 32 to 54 (FLAV…FTHR), 74 to 96 (YVAG…SVLG), and 103 to 123 (CFCY…AIYA). Positions 85–87 (NPA) match the NPA 1 motif. The N-linked (GlcNAc...) asparagine glycan is linked to Asn-143. A run of 2 helical transmembrane segments spans residues 161-181 (GAFV…LSMV) and 193-213 (FPIA…YNAG). Positions 217–219 (NPS) match the NPA 2 motif. Residues 243–263 (YTWFFVPVVGSHAGAIVGAVI) form a helical membrane-spanning segment. N-linked (GlcNAc...) asparagine glycosylation occurs at Asn-292.

The protein belongs to the MIP/aquaporin (TC 1.A.8) family.

It localises to the cell membrane. It catalyses the reaction H2O(in) = H2O(out). The catalysed reaction is glycerol(in) = glycerol(out). Aquaglyceroporin that may modulate the water content and osmolytes during anhydrobiosis. The protein is Aquaporin-2 of Milnesium tardigradum (Water bear).